The chain runs to 49 residues: ADTIVAVELDSYPNTDIGDPNYPHISIADENSLHFSFHKFSQNPKDLIL.

The protein belongs to the leguminous lectin family. Homotetramer. In terms of processing, the beta and gamma chains are produced by partial proteolytic processing of the lectin alpha chain by an asparaginyl endopeptidase. Mixture of 60% alpha lectin and 40% of its beta and gamma proteolytic fragments. As to expression, seed.

D-mannose/D-glucose-binding lectin. The protein is Lectin alpha chain of Dioclea violacea.